The following is a 434-amino-acid chain: ATP-dependent RNA helicase uap56 (434 aa).

The segment at 1 to 43 (MASAQEDLIDYEEEEELVQDQPAQEITPAADTAENGEKSDKKG) is disordered. The span at 7–18 (DLIDYEEEEELV) shows a compositional bias: acidic residues. A Q motif motif is present at residues 51–79 (TGFRDFLLKPELLRAITDSGFEHPSEVQQ). The Helicase ATP-binding domain maps to 82-257 (IPQSILGTDV…KKFMQNPLEI (176 aa)). Residue 95–102 (AKSGMGKT) coordinates ATP. Positions 204–207 (DECD) match the DECD box motif. The Helicase C-terminal domain occupies 269–430 (GLQQHYVKLE…ELPDEIDVGS (162 aa)).

Belongs to the DEAD box helicase family. DECD subfamily. In terms of assembly, interacts with mlo3 and rae1.

The protein resides in the nucleus. The enzyme catalyses ATP + H2O = ADP + phosphate + H(+). Its function is as follows. ATP-binding RNA helicase involved in transcription elongation and required for the export of mRNA out of the nucleus. SUB2 also plays a role in pre-mRNA splicing and spliceosome assembly. May be involved in rDNA and telomeric silencing, and maintenance of genome integrity. Links the mRNA adapter mlo3 to rae1 for targeting mRNA-protein complex to the proteins of the nucleoporin complex (NPC). The protein is ATP-dependent RNA helicase uap56 (uap56) of Schizosaccharomyces pombe (strain 972 / ATCC 24843) (Fission yeast).